A 167-amino-acid chain; its full sequence is Crossover junction endodeoxyribonuclease RuvC (167 aa).

Active-site residues include Asp-7, Glu-67, and Asp-139. Residues Asp-7, Glu-67, and Asp-139 each coordinate Mg(2+).

It belongs to the RuvC family. Homodimer which binds Holliday junction (HJ) DNA. The HJ becomes 2-fold symmetrical on binding to RuvC with unstacked arms; it has a different conformation from HJ DNA in complex with RuvA. In the full resolvosome a probable DNA-RuvA(4)-RuvB(12)-RuvC(2) complex forms which resolves the HJ. Mg(2+) is required as a cofactor.

The protein localises to the cytoplasm. It carries out the reaction Endonucleolytic cleavage at a junction such as a reciprocal single-stranded crossover between two homologous DNA duplexes (Holliday junction).. The RuvA-RuvB-RuvC complex processes Holliday junction (HJ) DNA during genetic recombination and DNA repair. Endonuclease that resolves HJ intermediates. Cleaves cruciform DNA by making single-stranded nicks across the HJ at symmetrical positions within the homologous arms, yielding a 5'-phosphate and a 3'-hydroxyl group; requires a central core of homology in the junction. The consensus cleavage sequence is 5'-(A/T)TT(C/G)-3'. Cleavage occurs on the 3'-side of the TT dinucleotide at the point of strand exchange. HJ branch migration catalyzed by RuvA-RuvB allows RuvC to scan DNA until it finds its consensus sequence, where it cleaves and resolves the cruciform DNA. This is Crossover junction endodeoxyribonuclease RuvC from Zymomonas mobilis subsp. mobilis (strain ATCC 31821 / ZM4 / CP4).